Consider the following 420-residue polypeptide: Gamma-glutamyl phosphate reductase (420 aa).

The protein belongs to the gamma-glutamyl phosphate reductase family.

Its subcellular location is the cytoplasm. It carries out the reaction L-glutamate 5-semialdehyde + phosphate + NADP(+) = L-glutamyl 5-phosphate + NADPH + H(+). It participates in amino-acid biosynthesis; L-proline biosynthesis; L-glutamate 5-semialdehyde from L-glutamate: step 2/2. Catalyzes the NADPH-dependent reduction of L-glutamate 5-phosphate into L-glutamate 5-semialdehyde and phosphate. The product spontaneously undergoes cyclization to form 1-pyrroline-5-carboxylate. The sequence is that of Gamma-glutamyl phosphate reductase from Alkalilimnicola ehrlichii (strain ATCC BAA-1101 / DSM 17681 / MLHE-1).